Consider the following 383-residue polypeptide: BRISC and BRCA1-A complex member 2 (383 aa).

2 UEV-like regions span residues 30 to 147 (DATN…TLLE) and 275 to 364 (IAAF…RAKA).

The protein belongs to the BABAM2 family. As to quaternary structure, component of the ARISC complex, at least composed of UIMC1/RAP80, ABRAXAS1, BRCC3/BRCC36, BABAM2 and BABAM1/NBA1. Component of the BRCA1-A complex, at least composed of BRCA1, BARD1, UIMC1/RAP80, ABRAXAS1, BRCC3/BRCC36, BABAM2 and BABAM1/NBA1. In the BRCA1-A complex, interacts directly with ABRAXAS1, BRCC3/BRCC36 and BABAM1/NBA1. Binds polyubiquitin. Component of the BRISC complex, at least composed of ABRAXAS2, BRCC3/BRCC36, BABAM2 and BABAM1/NBA1. Identified in a complex with SHMT2 and the other subunits of the BRISC complex. Component of the BRCA1/BRCA2 containing complex (BRCC), which also contains BRCA1, BRCA2, BARD1, BRCC3/BRCC36 and RAD51. BRCC is a ubiquitin E3 ligase complex that enhances cellular survival following DNA damage. May interact with FAS and TNFRSF1A.

The protein resides in the cytoplasm. Its subcellular location is the nucleus. Component of the BRCA1-A complex, a complex that specifically recognizes 'Lys-63'-linked ubiquitinated histones H2A and H2AX at DNA lesions sites, leading to target the BRCA1-BARD1 heterodimer to sites of DNA damage at double-strand breaks (DSBs). The BRCA1-A complex also possesses deubiquitinase activity that specifically removes 'Lys-63'-linked ubiquitin on histones H2A and H2AX. In the BRCA1-A complex, it acts as an adapter that bridges the interaction between BABAM1/NBA1 and the rest of the complex, thereby being required for the complex integrity and modulating the E3 ubiquitin ligase activity of the BRCA1-BARD1 heterodimer. Component of the BRISC complex, a multiprotein complex that specifically cleaves 'Lys-63'-linked ubiquitin in various substrates. Within the BRISC complex, acts as an adapter that bridges the interaction between BABAM1/NBA1 and the rest of the complex, thereby being required for the complex integrity. The BRISC complex is required for normal mitotic spindle assembly and microtubule attachment to kinetochores via its role in deubiquitinating NUMA1. The BRISC complex plays a role in interferon signaling via its role in the deubiquitination of the interferon receptor IFNAR1; deubiquitination increases IFNAR1 activity by enhancing its stability and cell surface expression. Down-regulates the response to bacterial lipopolysaccharide (LPS) via its role in IFNAR1 deubiquitination. May play a role in homeostasis or cellular differentiation in cells of neural, epithelial and germline origins. May also act as a death receptor-associated anti-apoptotic protein, which inhibits the mitochondrial apoptotic pathway. May regulate TNF-alpha signaling through its interactions with TNFRSF1A; however these effects may be indirect. The sequence is that of BRISC and BRCA1-A complex member 2 (BABAM2) from Gallus gallus (Chicken).